Here is a 391-residue protein sequence, read N- to C-terminus: Pectin acetylesterase 11 (391 aa).

A signal peptide spans 1 to 23 (MTWLKQMWSSILVLAVVVIGARA). Catalysis depends on charge relay system residues Ser171, Asp267, and His334.

Belongs to the pectinacetylesterase family.

The protein resides in the secreted. It localises to the cell wall. Its function is as follows. Hydrolyzes acetyl esters in homogalacturonan regions of pectin. In type I primary cell wall, galacturonic acid residues of pectin can be acetylated at the O-2 and O-3 positions. Decreasing the degree of acetylation of pectin gels in vitro alters their physical properties. This chain is Pectin acetylesterase 11, found in Arabidopsis thaliana (Mouse-ear cress).